A 324-amino-acid chain; its full sequence is DGAT1/2-independent enzyme synthesizing storage lipids (324 aa).

Residues 1-50 (MIDKNQTCGVGQDSVPYMICLIHILEEWFGVEQLEDYLNFANYLLWVFTP) are Lumenal-facing. Asparagine 5 carries an N-linked (GlcNAc...) asparagine glycan. A helical transmembrane segment spans residues 51–71 (LILLILPYFTIFLLYLTIIFL). The Cytoplasmic portion of the chain corresponds to 72–125 (HIYKRKNVLKEAYSHNLWDGARKTVATLWDGHAAVWHGYEVHGMEKIPEDGPAL). The helical transmembrane segment at 126 to 146 (IIFYHGAIPIDFYYFMAKIFI) threads the bilayer. Histidine 130 is an active-site residue. Residues 147 to 324 (HKGRTCRVVA…IMSALLERFH (178 aa)) are Lumenal-facing.

This sequence belongs to the diacylglycerol acyltransferase family. Highly divergent.

The protein localises to the endoplasmic reticulum membrane. It catalyses the reaction a 1,2-diacylglycerol + a 1,2-diacyl-sn-glycero-3-phosphocholine = a triacylglycerol + a 1-acyl-sn-glycero-3-phosphocholine. The catalysed reaction is a 1-O-alkyl-2-acyl-sn-glycero-3-phosphocholine + a 1,2-diacylglycerol = a 1-O-alkyl-sn-glycero-3-phosphocholine + a triacylglycerol. It carries out the reaction a 2-acylglycerol + an acyl-CoA = a 1,2-diacylglycerol + CoA. The enzyme catalyses an acyl-CoA + a 1,2-diacyl-sn-glycerol = a triacyl-sn-glycerol + CoA. It catalyses the reaction 2-(9Z-octadecenoyl)-glycerol + (9Z)-octadecenoyl-CoA = 1,2-di-(9Z-octadecenoyl)-glycerol + CoA. The catalysed reaction is 1,2-di-(9Z-octadecenoyl)-sn-glycerol + (9Z)-octadecenoyl-CoA = 1,2,3-tri-(9Z-octadecenoyl)-glycerol + CoA. Acyltransferase activity is specifically inhibited by TMX1 at the endoplasmic reticulum, restricting accumulation of triacylglycerol. Catalytic subunit of the alternative triglyceride biosynthesis pathway, which mediates formation of triacylglycerol from diacylglycerol and membrane phospholipids. Synthesizes triacylglycerol at the expense of membrane phospholipids, such as phosphatidylcholine (PC) and its ether-linked form (ePC), thereby altering the composition of membranes. The alternative triglyceride biosynthesis pathway is probably required to provide the energy required for rapid growth when fuel sources are limiting. It maintains mitochondrial function during periods of extracellular lipid starvation. Can also use acyl-CoA as donor: acts as a acyl-CoA:monoacylglycerol acyltransferase (MGAT), but also shows acyl-CoA:diacylglycerol acyltransferase (DGAT) activity. This Homo sapiens (Human) protein is DGAT1/2-independent enzyme synthesizing storage lipids.